The following is a 274-amino-acid chain: Ribosomal RNA small subunit methyltransferase A (274 aa).

S-adenosyl-L-methionine is bound by residues Asn17, Leu19, Gly44, Glu65, Asp89, and Asn111.

This sequence belongs to the class I-like SAM-binding methyltransferase superfamily. rRNA adenine N(6)-methyltransferase family. RsmA subfamily.

The protein resides in the cytoplasm. It catalyses the reaction adenosine(1518)/adenosine(1519) in 16S rRNA + 4 S-adenosyl-L-methionine = N(6)-dimethyladenosine(1518)/N(6)-dimethyladenosine(1519) in 16S rRNA + 4 S-adenosyl-L-homocysteine + 4 H(+). Its function is as follows. Specifically dimethylates two adjacent adenosines (A1518 and A1519) in the loop of a conserved hairpin near the 3'-end of 16S rRNA in the 30S particle. May play a critical role in biogenesis of 30S subunits. This Buchnera aphidicola subsp. Schizaphis graminum (strain Sg) protein is Ribosomal RNA small subunit methyltransferase A.